Here is a 38-residue protein sequence, read N- to C-terminus: Large ribosomal subunit protein bL36 (38 aa).

It belongs to the bacterial ribosomal protein bL36 family.

The sequence is that of Large ribosomal subunit protein bL36 from Amoebophilus asiaticus (strain 5a2).